Consider the following 136-residue polypeptide: UPF0310 protein SMU_442 (136 aa).

The protein belongs to the UPF0310 family.

This chain is UPF0310 protein SMU_442, found in Streptococcus mutans serotype c (strain ATCC 700610 / UA159).